The following is a 346-amino-acid chain: B3 domain-containing protein At3g25182 (346 aa).

The tract at residues 168–187 (KRRAVEQRKRTGGVKKAKVA) is disordered. A DNA-binding region (TF-B3) is located at residues 237-338 (FNNLLRNDFL…ILCFAMEQRS (102 aa)).

The protein localises to the nucleus. This chain is B3 domain-containing protein At3g25182, found in Arabidopsis thaliana (Mouse-ear cress).